A 401-amino-acid chain; its full sequence is MKINFINLGCPKNLVDSENIMGFFKKENISSYHRADTVVINTCGFIEQAKRESIEEILKAIGDGKKVFVTGCLVYRYKEELQKEIPEAVFFENIKDLEGIELLQTPKRQLTTKHYAYLKIAEGCNRKCSFCAIPNIRGHHRSKSIEELVEEAIYLKEKGVKELIIVSQDTLYYQEDNSFKSIIKLLDALEKLDFPWIRLMYLYPNSISKDFIDYIDNSKSVLPYFDIPLQHISDNILKSMRRGYTKKDVFRLLEQINAMKHKKPILRSSFIVGYPTEEERDFEELLDFISQELFHFVGVFEYSHEEGTYAYQFDDKIPKEEKQRRYKEVFNLSQEILEEKNSALVGQEIDILIEKKDRARAFFQAPEIDGIVFLEKSSPKTGIIKKAKVIANIGTDLLVDI.

The 108-residue stretch at 1 to 108 (MKINFINLGC…GIELLQTPKR (108 aa)) folds into the MTTase N-terminal domain. Residues C10, C43, C72, C124, C128, and C131 each contribute to the [4Fe-4S] cluster site. A Radical SAM core domain is found at 110 to 339 (LTTKHYAYLK…FNLSQEILEE (230 aa)).

Belongs to the methylthiotransferase family. RimO subfamily. Requires [4Fe-4S] cluster as cofactor.

The protein localises to the cytoplasm. The enzyme catalyses L-aspartate(89)-[ribosomal protein uS12]-hydrogen + (sulfur carrier)-SH + AH2 + 2 S-adenosyl-L-methionine = 3-methylsulfanyl-L-aspartate(89)-[ribosomal protein uS12]-hydrogen + (sulfur carrier)-H + 5'-deoxyadenosine + L-methionine + A + S-adenosyl-L-homocysteine + 2 H(+). Its function is as follows. Catalyzes the methylthiolation of an aspartic acid residue of ribosomal protein uS12. The polypeptide is Ribosomal protein uS12 methylthiotransferase RimO (Hydrogenobaculum sp. (strain Y04AAS1)).